Here is a 324-residue protein sequence, read N- to C-terminus: 6-methylsalicylic acid decarboxylase (324 aa).

His7, His9, His157, and Asp274 together coordinate Zn(2+).

The protein belongs to the metallo-dependent hydrolases superfamily. ACMSD family. As to quaternary structure, monomer.

The protein resides in the cytoplasm. It is found in the cytosol. The enzyme catalyses 6-methylsalicylate + H(+) = 3-methylphenol + CO2. The protein operates within mycotoxin biosynthesis; patulin biosynthesis. Its function is as follows. 6-methylsalicylic acid decarboxylase; part of the gene cluster that mediates the biosynthesis of patulin, an acetate-derived tetraketide mycotoxin produced by several fungal species that shows antimicrobial properties against several bacteria. PatG catalyzes the decarboxylation of 6-methylsalicylic acid to yield m-cresol. The pathway begins with the synthesis of 6-methylsalicylic acid by the polyketide synthase (PKS) patK via condensation of acetate and malonate units. The 6-methylsalicylic acid decarboxylase patG then catalyzes the decarboxylation of 6-methylsalicylic acid to yield m-cresol (also known as 3-methylphenol). These first reactions occur in the cytosol. The intermediate m-cresol is then transported into the endoplasmic reticulum where the cytochrome P450 monooxygenase patH converts it to m-hydroxybenzyl alcohol, which is further converted to gentisyl alcohol by the cytochrome P450 monooxygenase patI. The oxidoreductases patJ and patO further convert gentisyl alcohol to isoepoxydon in the vacuole. PatN catalyzes then the transformation of isoepoxydon into phyllostine. The cluster protein patF is responsible for the conversion from phyllostine to neopatulin whereas the alcohol dehydrogenase patD converts neopatulin to E-ascladiol. The steps between isoepoxydon and E-ascladiol occur in the cytosol, and E-ascladiol is probably secreted to the extracellular space by one of the cluster-specific transporters patC or patM. Finally, the secreted patulin synthase patE catalyzes the conversion of E-ascladiol to patulin. This chain is 6-methylsalicylic acid decarboxylase, found in Penicillium expansum (Blue mold rot fungus).